The sequence spans 69 residues: Large ribosomal subunit protein uL29 (69 aa).

The protein belongs to the universal ribosomal protein uL29 family.

This chain is Large ribosomal subunit protein uL29, found in Sulfolobus acidocaldarius (strain ATCC 33909 / DSM 639 / JCM 8929 / NBRC 15157 / NCIMB 11770).